Reading from the N-terminus, the 105-residue chain is ATP-dependent Clp protease adapter protein ClpS (105 aa).

The protein belongs to the ClpS family. In terms of assembly, binds to the N-terminal domain of the chaperone ClpA.

Involved in the modulation of the specificity of the ClpAP-mediated ATP-dependent protein degradation. In Prochlorococcus marinus (strain MIT 9515), this protein is ATP-dependent Clp protease adapter protein ClpS.